We begin with the raw amino-acid sequence, 339 residues long: ATPase GET3 (339 aa).

37-44 contacts ATP; that stretch reads KGGVGKTT. Residue aspartate 66 is part of the active site. Positions 237 and 264 each coordinate ATP. Zn(2+) is bound by residues cysteine 275 and cysteine 278.

This sequence belongs to the arsA ATPase family. Homodimer.

The protein resides in the cytoplasm. It localises to the endoplasmic reticulum. Functionally, ATPase required for the post-translational delivery of tail-anchored (TA) proteins to the endoplasmic reticulum. Recognizes and selectively binds the transmembrane domain of TA proteins in the cytosol. This complex then targets to the endoplasmic reticulum by membrane-bound receptors, where the tail-anchored protein is released for insertion. This process is regulated by ATP binding and hydrolysis. ATP binding drives the homodimer towards the closed dimer state, facilitating recognition of newly synthesized TA membrane proteins. ATP hydrolysis is required for insertion. Subsequently, the homodimer reverts towards the open dimer state, lowering its affinity for the membrane-bound receptor, and returning it to the cytosol to initiate a new round of targeting. In Rhodotorula glutinis (Yeast), this protein is ATPase GET3.